An 84-amino-acid chain; its full sequence is Cell division topological specificity factor (84 aa).

It belongs to the MinE family.

Its function is as follows. Prevents the cell division inhibition by proteins MinC and MinD at internal division sites while permitting inhibition at polar sites. This ensures cell division at the proper site by restricting the formation of a division septum at the midpoint of the long axis of the cell. In Pseudomonas fluorescens (strain ATCC BAA-477 / NRRL B-23932 / Pf-5), this protein is Cell division topological specificity factor.